A 219-amino-acid polypeptide reads, in one-letter code: MCPARSLLLVATLVLLDYLSLARNLSVATPGPEMFPCLHHSQNLLKAACNTLQKARQILEFYPCTSEEIDHEDITKDKTSTVEACLPLELIKNESCLNSRETSVITNGSCLASRKTSFMMALCLRSIYEDLKIYQVEFKTMNAKLLMDPKRQIFLDQNILGVIDELMQALNFNSETVPQKSSLEEPDFYKTKIKLCILLHAFKIRAVTIDRVMSYLNAS.

A signal peptide spans 1 to 22 (MCPARSLLLVATLVLLDYLSLA). Residues asparagine 24, asparagine 93, and asparagine 107 are each glycosylated (N-linked (GlcNAc...) asparagine). Cystine bridges form between cysteine 37–cysteine 110, cysteine 64–cysteine 196, and cysteine 85–cysteine 123.

It belongs to the IL-6 superfamily. As to quaternary structure, heterodimer with IL12B; disulfide-linked. This heterodimer is known as interleukin IL-12. Heterodimer with EBI3/IL27B; not disulfide-linked. This heterodimer is known as interleukin IL-35. Interacts with NBR1; this interaction promotes IL-12 secretion.

Its subcellular location is the secreted. In terms of biological role, heterodimerizes with IL12B to form the IL-12 cytokine or with EBI3/IL27B to form the IL-35 cytokine. IL-12 is primarily produced by professional antigen-presenting cells (APCs) such as B-cells and dendritic cells (DCs) as well as macrophages and granulocytes and regulates T-cell and natural killer-cell responses, induces the production of interferon-gamma (IFN-gamma), favors the differentiation of T-helper 1 (Th1) cells and is an important link between innate resistance and adaptive immunity. Mechanistically, exerts its biological effects through a receptor composed of IL12R1 and IL12R2 subunits. Binding to the receptor results in the rapid tyrosine phosphorylation of a number of cellular substrates including the JAK family kinases TYK2 and JAK2. In turn, recruited STAT4 gets phosphorylated and translocates to the nucleus where it regulates cytokine/growth factor responsive genes. As part of IL-35, plays essential roles in maintaining the immune homeostasis of the liver microenvironment and also functions as an immune-suppressive cytokine. Mediates biological events through unconventional receptors composed of IL12RB2 and gp130/IL6ST heterodimers or homodimers. Signaling requires the transcription factors STAT1 and STAT4, which form a unique heterodimer that binds to distinct DNA sites. This is Interleukin-12 subunit alpha (IL12A) from Cercocebus atys (Sooty mangabey).